The sequence spans 66 residues: Large ribosomal subunit protein bL35 (66 aa).

Residues 1 to 46 are compositionally biased toward basic residues; that stretch reads MPKMKTHRASAKRFKRTGNGGLKRHHAFTGHRFHGKTKKQRRHLRK. The segment at 1–50 is disordered; that stretch reads MPKMKTHRASAKRFKRTGNGGLKRHHAFTGHRFHGKTKKQRRHLRKAAMV.

It belongs to the bacterial ribosomal protein bL35 family.

The protein is Large ribosomal subunit protein bL35 of Lactobacillus delbrueckii subsp. bulgaricus (strain ATCC 11842 / DSM 20081 / BCRC 10696 / JCM 1002 / NBRC 13953 / NCIMB 11778 / NCTC 12712 / WDCM 00102 / Lb 14).